We begin with the raw amino-acid sequence, 359 residues long: Histamine H2 receptor (359 aa).

Over 1–22 (MAPNGTASSFCLDSTACKITIT) the chain is Extracellular. Asn4 is a glycosylation site (N-linked (GlcNAc...) asparagine). Residues 23-44 (VVLAVLILITVAGNVVVCLAVG) form a helical membrane-spanning segment. The Cytoplasmic segment spans residues 45–57 (LNRRLRNLTNCFI). The chain crosses the membrane as a helical span at residues 58 to 81 (VSLAITDLLLGLLVLPFSAIYQLS). The Extracellular portion of the chain corresponds to 82–92 (CKWSFGKVFCN). A disulfide bond links Cys91 and Cys174. Residues 93–114 (IYTSLDVMLCTASILNLFMISL) traverse the membrane as a helical segment. Residues 115-134 (DRYCAVMDPLRYPVLVTPVR) are Cytoplasmic-facing. The chain crosses the membrane as a helical span at residues 135–159 (VAISLVLIWVISITLSFLSIHLGWN). Residues 160–180 (SRNETSKGNHTTSKCKVQVNE) are Extracellular-facing. Residues 181 to 204 (VYGLVDGLVTFYLPLLIMCITYYR) form a helical membrane-spanning segment. Topologically, residues 205-234 (IFKVARDQAKRINHISSWKAATIREHKATV) are cytoplasmic. The chain crosses the membrane as a helical span at residues 235–258 (TLAAVMGAFIICWFPYFTAFVYRG). Over 259-267 (LRGDDAINE) the chain is Extracellular. Residues 268–289 (VLEAIVLWLGYANSALNPILYA) form a helical membrane-spanning segment. At 290–359 (ALNRDFRTGY…VTAPQGATDR (70 aa)) the chain is on the cytoplasmic side. A lipid anchor (S-palmitoyl cysteine) is attached at Cys305. The interval 316–340 (SLRSNASQLSRTQSREPRQQEEKPL) is disordered. Polar residues predominate over residues 317–327 (LRSNASQLSRT). Residues 328–340 (QSREPRQQEEKPL) show a composition bias toward basic and acidic residues.

It belongs to the G-protein coupled receptor 1 family.

It localises to the cell membrane. In terms of biological role, the H2 subclass of histamine receptors mediates gastric acid secretion. Also appears to regulate gastrointestinal motility and intestinal secretion. Possible role in regulating cell growth and differentiation. The activity of this receptor is mediated by G proteins which activate adenylyl cyclase and, through a separate G protein-dependent mechanism, the phosphoinositide/protein kinase (PKC) signaling pathway. This Gorilla gorilla gorilla (Western lowland gorilla) protein is Histamine H2 receptor (HRH2).